A 361-amino-acid polypeptide reads, in one-letter code: Mannose-1-phosphate guanyltransferase 2 (361 aa).

It belongs to the transferase hexapeptide repeat family.

It is found in the cytoplasm. It carries out the reaction alpha-D-mannose 1-phosphate + GTP + H(+) = GDP-alpha-D-mannose + diphosphate. Its pathway is nucleotide-sugar biosynthesis; GDP-alpha-D-mannose biosynthesis; GDP-alpha-D-mannose from alpha-D-mannose 1-phosphate (GTP route): step 1/1. Its function is as follows. Involved in cell wall synthesis where it is required for glycosylation. Involved in cell cycle progression through cell-size checkpoint. In Candida glabrata (strain ATCC 2001 / BCRC 20586 / JCM 3761 / NBRC 0622 / NRRL Y-65 / CBS 138) (Yeast), this protein is Mannose-1-phosphate guanyltransferase 2 (MPG1).